The sequence spans 239 residues: Sugar fermentation stimulation protein homolog (239 aa).

Belongs to the SfsA family.

In Synechococcus sp. (strain JA-3-3Ab) (Cyanobacteria bacterium Yellowstone A-Prime), this protein is Sugar fermentation stimulation protein homolog.